The sequence spans 493 residues: GTPase Der (493 aa).

EngA-type G domains lie at 3–166 and 206–379; these read PVVA…AEAL and IKLA…KSAT. Residues 9–16, 56–60, 118–121, 212–219, 259–263, and 324–327 each bind GTP; these read GRPNVGKS, DTGGI, NKVD, DTAGV, and NKWD. The KH-like domain maps to 380–464; sequence TRVGTSVLTR…PIRIQFQNSE (85 aa).

This sequence belongs to the TRAFAC class TrmE-Era-EngA-EngB-Septin-like GTPase superfamily. EngA (Der) GTPase family. In terms of assembly, associates with the 50S ribosomal subunit.

Its function is as follows. GTPase that plays an essential role in the late steps of ribosome biogenesis. The sequence is that of GTPase Der from Vibrio atlanticus (strain LGP32) (Vibrio splendidus (strain Mel32)).